Here is a 334-residue protein sequence, read N- to C-terminus: Ferredoxin--NADP reductase (334 aa).

FAD-binding residues include aspartate 33, glutamine 41, tyrosine 46, alanine 86, phenylalanine 120, aspartate 286, and threonine 327.

It belongs to the ferredoxin--NADP reductase type 2 family. Homodimer. Requires FAD as cofactor.

It carries out the reaction 2 reduced [2Fe-2S]-[ferredoxin] + NADP(+) + H(+) = 2 oxidized [2Fe-2S]-[ferredoxin] + NADPH. This chain is Ferredoxin--NADP reductase, found in Rickettsia prowazekii (strain Madrid E).